The sequence spans 357 residues: Hemolysin VllY (357 aa).

VOC domains lie at 12-132 (GFEF…FVDR) and 162-313 (EIDH…IFTQ). Residues H165, H243, and E322 each coordinate Fe cation.

The protein belongs to the 4HPPD family. The cofactor is Fe cation.

The sequence is that of Hemolysin VllY (vllY) from Vibrio vulnificus (strain CMCP6).